A 475-amino-acid polypeptide reads, in one-letter code: CAAX prenyl protease 1 homolog (475 aa).

The Lumenal segment spans residues 1–18; that stretch reads MGMWASVDAMWDFPAEKR. The chain crosses the membrane as a helical span at residues 19–39; that stretch reads IFGAVLLFSWTVYLWETFLAQ. Residues 40–81 are Nuclear-facing; the sequence is RQRRIYKTTTRVPAELEQIMDSDTFEKSRLYQLDKSTFSFWS. The chain crosses the membrane as a helical span at residues 82–102; sequence GLYSEVEGTFILLFGGIPYLW. Over 103–123 the chain is Lumenal; that stretch reads RLSGQFCSSAGFGPEYEIIQS. Residues 124–144 form a helical membrane-spanning segment; sequence LVFLLLATLFSALTGLPWSLY. The Nuclear segment spans residues 145-170; sequence NTFVIEEKHGFNHQTLEFFMKDAIKK. Residues 171–191 traverse the membrane as a helical segment; sequence FIVTQCILLPVSALLLYIIKI. Residues 192–195 are Lumenal-facing; that stretch reads GGDY. Residues 196-216 traverse the membrane as a helical segment; that stretch reads FFIYAWLFTLVVSLVLVTIYA. The Nuclear portion of the chain corresponds to 217–347; it reads DYIAPLFDKF…GHWKLGHTVK (131 aa). Residues 293–314 form a disordered region; sequence DNQEESGMEARNEGEGDSEEVK. Over residues 300–314 the composition is skewed to basic and acidic residues; sequence MEARNEGEGDSEEVK. Zn(2+) is bound at residue histidine 335. Residue glutamate 336 is part of the active site. Zn(2+) is bound at residue histidine 339. Residues 348 to 368 form a helical membrane-spanning segment; it reads NIIISQMNSFLCFFLFAVLIG. The Lumenal portion of the chain corresponds to 369-382; it reads RRELFAAFGFYDSQ. The helical transmembrane segment at 383 to 405 threads the bilayer; it reads PTLIGLLIIFQFIFSPYNEVLSF. Residues 406–475 lie on the Nuclear side of the membrane; the sequence is CLTVLSRRFE…LQALKNAKQD (70 aa). Glutamate 415 serves as a coordination point for Zn(2+).

This sequence belongs to the peptidase M48A family. It depends on Zn(2+) as a cofactor.

The protein resides in the endoplasmic reticulum membrane. It localises to the nucleus inner membrane. Its subcellular location is the early endosome membrane. It is found in the late endosome membrane. It catalyses the reaction Hydrolyzes the peptide bond -P2-(S-farnesyl or geranylgeranyl)C-P1'-P2'-P3'-COOH where P1' and P2' are amino acids with aliphatic side chains and P3' is any C-terminal residue.. Inhibited by HIV protease inhibitors, such as lopinavir, tipranavir and nelfinavir, leading to defects in lamin A/LMNA maturation and accumulation of prelamin-A/C precursors in cells. This causes defects in nuclear envelope integrity and release of DNA in the cytosol, activating the AIM2 inflammasome. Functionally, transmembrane metalloprotease whose catalytic activity is critical for processing lamin A/LMNA on the inner nuclear membrane and clearing clogged translocons on the endoplasmic reticulum. Proteolytically removes the C-terminal three residues of farnesylated proteins. Also plays an antiviral role independently of its protease activity by restricting enveloped RNA and DNA viruses. Mechanistically, controls IFITM antiviral pathway to hinder viruses from breaching the endosomal barrier by modulating membrane fluidity. This chain is CAAX prenyl protease 1 homolog, found in Mus musculus (Mouse).